The sequence spans 90 residues: U7-theraphotoxin-Hhn1f (90 aa).

Positions 1-19 (MKTAIFTVVLALAVFAVLS) are cleaved as a signal peptide. The propeptide occupies 20-50 (FGWEANEKALSEEFTELIHEKEAASETEARG). Cystine bridges form between Cys51–Cys65, Cys58–Cys70, and Cys64–Cys81.

Belongs to the neurotoxin 10 (Hwtx-1) family. 13 (Hntx-13) subfamily. Expressed by the venom gland.

The protein localises to the secreted. In terms of biological role, ion channel inhibitor. This is U7-theraphotoxin-Hhn1f from Cyriopagopus hainanus (Chinese bird spider).